A 364-amino-acid polypeptide reads, in one-letter code: Glutamate 5-kinase (364 aa).

Position 7 (K7) interacts with ATP. 3 residues coordinate substrate: S47, D134, and N146. ATP contacts are provided by residues 166–167 (TD) and 209–215 (TGGIKTK). Residues 274–349 (QGTLHVDDGA…NRIKSTQYPV (76 aa)) form the PUA domain.

This sequence belongs to the glutamate 5-kinase family.

The protein localises to the cytoplasm. It carries out the reaction L-glutamate + ATP = L-glutamyl 5-phosphate + ADP. Its pathway is amino-acid biosynthesis; L-proline biosynthesis; L-glutamate 5-semialdehyde from L-glutamate: step 1/2. In terms of biological role, catalyzes the transfer of a phosphate group to glutamate to form L-glutamate 5-phosphate. This Prochlorococcus marinus (strain SARG / CCMP1375 / SS120) protein is Glutamate 5-kinase.